The chain runs to 539 residues: O-phosphoserine--tRNA(Cys) ligase (539 aa).

Substrate contacts are provided by residues 188 to 190 (HMT), 233 to 235 (SAS), 275 to 276 (YY), and asparagine 327.

It belongs to the class-II aminoacyl-tRNA synthetase family. O-phosphoseryl-tRNA(Cys) synthetase subfamily. Homotetramer. Interacts with SepCysS.

The enzyme catalyses tRNA(Cys) + O-phospho-L-serine + ATP = O-phospho-L-seryl-tRNA(Cys) + AMP + diphosphate. Catalyzes the attachment of O-phosphoserine (Sep) to tRNA(Cys). This chain is O-phosphoserine--tRNA(Cys) ligase, found in Methanosarcina acetivorans (strain ATCC 35395 / DSM 2834 / JCM 12185 / C2A).